The primary structure comprises 83 residues: Mu-theraphotoxin-Hhn2p (83 aa).

An N-terminal signal peptide occupies residues 1–21; that stretch reads MKASMYLALAGLVLLFVVGYA. Residues 22 to 48 constitute a propeptide that is removed on maturation; it reads SESEEKEFPRELLSKIFAVDDFKGEER. 3 cysteine pairs are disulfide-bonded: Cys-50–Cys-65, Cys-57–Cys-70, and Cys-64–Cys-77. Leucine amide is present on Leu-81.

This sequence belongs to the neurotoxin 10 (Hwtx-1) family. 15 (Hntx-3) subfamily. As to quaternary structure, monomer. As to expression, expressed by the venom gland.

Its subcellular location is the secreted. Lethal neurotoxin. Selectively blocks tetrodotoxin-sensitive voltage-gated sodium channels (Nav). Does not affect tetrodotoxin-resistant voltage-gated sodium channels or calcium channels. This chain is Mu-theraphotoxin-Hhn2p, found in Cyriopagopus hainanus (Chinese bird spider).